The sequence spans 878 residues: DNA mismatch repair protein MutS (878 aa).

Gly629 to Ser636 lines the ATP pocket.

It belongs to the DNA mismatch repair MutS family.

Its function is as follows. This protein is involved in the repair of mismatches in DNA. It is possible that it carries out the mismatch recognition step. This protein has a weak ATPase activity. The sequence is that of DNA mismatch repair protein MutS from Roseobacter denitrificans (strain ATCC 33942 / OCh 114) (Erythrobacter sp. (strain OCh 114)).